We begin with the raw amino-acid sequence, 123 residues long: Large ribosomal subunit protein uL14c (123 aa).

Belongs to the universal ribosomal protein uL14 family. As to quaternary structure, part of the 50S ribosomal subunit.

It localises to the plastid. It is found in the chloroplast. Functionally, binds to 23S rRNA. The protein is Large ribosomal subunit protein uL14c of Saccharum hybrid (Sugarcane).